We begin with the raw amino-acid sequence, 530 residues long: Glucose-6-phosphate isomerase (530 aa).

Residue E335 is the Proton donor of the active site. Active-site residues include H366 and K495.

Belongs to the GPI family.

It localises to the cytoplasm. The catalysed reaction is alpha-D-glucose 6-phosphate = beta-D-fructose 6-phosphate. It functions in the pathway carbohydrate biosynthesis; gluconeogenesis. The protein operates within carbohydrate degradation; glycolysis; D-glyceraldehyde 3-phosphate and glycerone phosphate from D-glucose: step 2/4. Its function is as follows. Catalyzes the reversible isomerization of glucose-6-phosphate to fructose-6-phosphate. This Roseobacter denitrificans (strain ATCC 33942 / OCh 114) (Erythrobacter sp. (strain OCh 114)) protein is Glucose-6-phosphate isomerase.